The chain runs to 368 residues: Methionine import ATP-binding protein MetN (368 aa).

The span at 1–14 shows a compositional bias: polar residues; sequence MASDAQPSVDQPSA. The disordered stretch occupies residues 1–27; it reads MASDAQPSVDQPSAGTPGATGNSTGTT. Over residues 15–27 the composition is skewed to low complexity; sequence GTPGATGNSTGTT. Positions 31–270 constitute an ABC transporter domain; that stretch reads IVFRDVTKIF…PQTKTAANFV (240 aa). 67 to 74 contributes to the ATP binding site; that stretch reads GYSGAGKS.

It belongs to the ABC transporter superfamily. Methionine importer (TC 3.A.1.24) family. As to quaternary structure, the complex is composed of two ATP-binding proteins (MetN), two transmembrane proteins (MetI) and a solute-binding protein (MetQ).

The protein localises to the cell membrane. The catalysed reaction is L-methionine(out) + ATP + H2O = L-methionine(in) + ADP + phosphate + H(+). The enzyme catalyses D-methionine(out) + ATP + H2O = D-methionine(in) + ADP + phosphate + H(+). In terms of biological role, part of the ABC transporter complex MetNIQ involved in methionine import. Responsible for energy coupling to the transport system. This chain is Methionine import ATP-binding protein MetN, found in Corynebacterium jeikeium (strain K411).